The sequence spans 374 residues: DNA replication and repair protein RecF (374 aa).

Residue Gly-30–Ser-37 coordinates ATP.

It belongs to the RecF family.

The protein resides in the cytoplasm. In terms of biological role, the RecF protein is involved in DNA metabolism; it is required for DNA replication and normal SOS inducibility. RecF binds preferentially to single-stranded, linear DNA. It also seems to bind ATP. This is DNA replication and repair protein RecF from Acaryochloris marina (strain MBIC 11017).